The sequence spans 749 residues: Adenosylcobalamin-dependent ribonucleoside-triphosphate reductase (749 aa).

C124 and C427 are joined by a disulfide. An effector region-1 region spans residues 152-163; that stretch reads SMPFSFMFDQLM. Residues 173–321 are effector region-2; sequence TPNNVHQMPV…MGNMIGKTVV (149 aa). Catalysis depends on residues C416 and E418. The adenosylcobalamin-binding-1 stretch occupies residues 573–634; the sequence is FHYARYLIQR…EPAFASAGEV (62 aa). Residues 693–734 are adenosylcobalamin-binding-2; that stretch reads FKQAPKEPIDAATYDAKCQEITADVAEKFAAMTGNHDQKDIE.

It belongs to the class II ribonucleoside-triphosphate reductase family. In terms of assembly, monomer. Requires adenosylcob(III)alamin as cofactor.

The catalysed reaction is a 2'-deoxyribonucleoside 5'-triphosphate + [thioredoxin]-disulfide + H2O = a ribonucleoside 5'-triphosphate + [thioredoxin]-dithiol. With respect to regulation, allosterically regulated by ATP and dNTP. The polypeptide is Adenosylcobalamin-dependent ribonucleoside-triphosphate reductase (rtpR) (Levilactobacillus brevis (strain ATCC 367 / BCRC 12310 / CIP 105137 / JCM 1170 / LMG 11437 / NCIMB 947 / NCTC 947) (Lactobacillus brevis)).